The primary structure comprises 109 residues: Large ribosomal subunit protein P1 (109 aa).

The segment at 71-109 is disordered; that stretch reads APAAASSAPAKKEEPKKEEPKKEEPKEEETDMDMGDLFG. The segment covering 80–95 has biased composition (basic and acidic residues); that stretch reads AKKEEPKKEEPKKEEP. 3 tandem repeats follow at residues 81–85, 86–90, and 91–95. A 3 X 5 AA tandem repeats of K-K-E-E-P region spans residues 81–95; sequence KKEEPKKEEPKKEEP. Positions 96–109 are enriched in acidic residues; it reads KEEETDMDMGDLFG.

The protein belongs to the eukaryotic ribosomal protein P1/P2 family. In terms of processing, not phosphorylated.

The protein is Large ribosomal subunit protein P1 (RPLP1) of Tetrahymena thermophila.